A 142-amino-acid chain; its full sequence is Large ribosomal subunit protein uL13 (142 aa).

Belongs to the universal ribosomal protein uL13 family. Part of the 50S ribosomal subunit.

Its function is as follows. This protein is one of the early assembly proteins of the 50S ribosomal subunit, although it is not seen to bind rRNA by itself. It is important during the early stages of 50S assembly. The polypeptide is Large ribosomal subunit protein uL13 (Trichlorobacter lovleyi (strain ATCC BAA-1151 / DSM 17278 / SZ) (Geobacter lovleyi)).